The following is a 630-amino-acid chain: Pro-interleukin-16 (630 aa).

2 disordered regions span residues E30–T268 and P316–T343. Residues I129–S143 show a composition bias toward low complexity. Phosphoserine is present on S220. Positions S321 to T343 are enriched in polar residues. An interaction with PPP1R12A, PPP1R12B and PPP1R12C region spans residues K404 to S500. PDZ domains are found at residues H410 to K495 and T532 to K617.

As to quaternary structure, homotetramer. Pro-interleukin-16 interacts (via PDZ 2 domain) with PPP1R12A, PPP1R12B and PPP1R12C. Pro-interleukin-16 interacts with GRIN2A. Pro-interleukin-16 interacts with GABPB1. Pro-interleukin-16 interacts (via PDZ 3 domain) with HDAC3.

It localises to the secreted. It is found in the cytoplasm. The protein resides in the nucleus. Its function is as follows. Interleukin-16 stimulates a migratory response in CD4+ lymphocytes, monocytes, and eosinophils. Primes CD4+ T-cells for IL-2 and IL-15 responsiveness. Also induces T-lymphocyte expression of interleukin 2 receptor. Ligand for CD4. Pro-interleukin-16 is involved in cell cycle progression in T-cells. Appears to be involved in transcriptional regulation of SKP2 and is probably part of a transcriptional repression complex on the core promoter of the SKP2 gene. May act as a scaffold for GABPB1 (the DNA-binding subunit the GABP transcription factor complex) and HDAC3 thus maintaining transcriptional repression and blocking cell cycle progression in resting T-cells. This Macaca mulatta (Rhesus macaque) protein is Pro-interleukin-16 (IL16).